We begin with the raw amino-acid sequence, 65 residues long: Toxin NaTx-22 (65 aa).

The LCN-type CS-alpha/beta domain maps to 1–64; sequence KDGYPVIKTT…TYPIPGKTCK (64 aa). Cystine bridges form between Cys-12–Cys-63, Cys-16–Cys-39, Cys-25–Cys-44, and Cys-29–Cys-46.

The protein belongs to the long (4 C-C) scorpion toxin superfamily. Sodium channel inhibitor family. As to expression, expressed by the venom gland.

The protein localises to the secreted. Its function is as follows. Probable sodium channel inhibitor. This Centruroides sculpturatus (Arizona bark scorpion) protein is Toxin NaTx-22.